The primary structure comprises 146 residues: Wheatwin-1 (146 aa).

The signal sequence occupies residues M1–A21. Q22 is subject to Pyrrolidone carboxylic acid. The region spanning Q22–D146 is the Barwin domain. Intrachain disulfides connect C52–C84, C73–C107, and C87–C144.

Monomer.

With respect to regulation, inhibited by 5'-ADP. In terms of biological role, shows antifungal activity towards B.cinerea and towards the wheat-specific pathogenic fungi F.culmorum and F.graminearum (groups 1 and 2). Has ribonuclease activity. This Triticum aestivum (Wheat) protein is Wheatwin-1 (PR4A).